The sequence spans 175 residues: DASH complex subunit DAM1 (175 aa).

Residues M1 to A39 are disordered. Positions R20–A39 are enriched in low complexity.

It belongs to the DASH complex DAM1 family. As to quaternary structure, component of the DASH complex consisting of ASK1, DAD1, DAD2, DAD3, DAD4, DAM1, DUO1, HSK3, SPC19 and SPC34, with a stoichiometry of one copy of each subunit per complex. Multiple DASH complexes oligomerize to form a ring that encircles spindle microtubules and organizes the rod-like NDC80 complexes of the outer kinetochore. DASH complex oligomerization strengthens microtubule attachments. On cytoplasmic microtubules, DASH complexes appear to form patches instead of rings.

It is found in the chromosome. The protein resides in the centromere. It localises to the kinetochore. Its subcellular location is the cytoplasm. The protein localises to the cytoskeleton. It is found in the spindle. The protein resides in the nucleus. In terms of biological role, component of the DASH complex that connects microtubules with kinetochores and couples microtubule depolymerisation to chromosome movement; it is involved in retrieving kinetochores to the spindle poles before their re-orientation on the spindle in early mitosis and allows microtubule depolymerization to pull chromosomes apart and resist detachment during anaphase. Kinetochores, consisting of a centromere-associated inner segment and a microtubule-contacting outer segment, play a crucial role in chromosome segregation by mediating the physical connection between centromeric DNA and microtubules. Kinetochores also serve as an input point for the spindle assembly checkpoint, which delays anaphase until all chromosomes have bioriented on the mitotic spindle. The chain is DASH complex subunit DAM1 from Chaetomium thermophilum (strain DSM 1495 / CBS 144.50 / IMI 039719) (Thermochaetoides thermophila).